A 750-amino-acid chain; its full sequence is Photosystem I P700 chlorophyll a apoprotein A1 (750 aa).

8 helical membrane-spanning segments follow: residues 70-93 (VFSAHFGQLSIIFLWLSGMYFHGA), 156-179 (LYCTAIGALIFAALMLFAGWFHYH), 195-219 (LNHHLAGLLGLGSLSWAGHQVHVSL), 291-309 (IAHHHLAIAILFLIAGHMY), 346-369 (WHAQLSLNLAMLGSLTIVVAHHMY), 385-411 (LSLFTHHMWIGGFLIVGAAAHAAIFMV), 433-455 (AIISHLNWACIFLGFHSFGLYIH), and 531-549 (FLVHHIHAFTIHVTVLILL). Residues cysteine 573 and cysteine 582 each coordinate [4Fe-4S] cluster. Helical transmembrane passes span 589–610 (HVFLGLFWMYNAISVVIFHFSW) and 664–686 (LSAYGLFFLGAHFVWAFSLMFLF). Histidine 675 lines the chlorophyll a' pocket. Chlorophyll a contacts are provided by methionine 683 and tyrosine 691. Tryptophan 692 is a phylloquinone binding site. A helical membrane pass occupies residues 724–744 (AVGVTHYLLGGIATTWAFFLA).

Belongs to the PsaA/PsaB family. The PsaA/B heterodimer binds the P700 chlorophyll special pair and subsequent electron acceptors. PSI consists of a core antenna complex that captures photons, and an electron transfer chain that converts photonic excitation into a charge separation. The eukaryotic PSI reaction center is composed of at least 11 subunits. Requires P700 is a chlorophyll a/chlorophyll a' dimer, A0 is one or more chlorophyll a, A1 is one or both phylloquinones and FX is a shared 4Fe-4S iron-sulfur center. as cofactor.

The protein localises to the plastid. Its subcellular location is the chloroplast thylakoid membrane. The enzyme catalyses reduced [plastocyanin] + hnu + oxidized [2Fe-2S]-[ferredoxin] = oxidized [plastocyanin] + reduced [2Fe-2S]-[ferredoxin]. Functionally, psaA and PsaB bind P700, the primary electron donor of photosystem I (PSI), as well as the electron acceptors A0, A1 and FX. PSI is a plastocyanin-ferredoxin oxidoreductase, converting photonic excitation into a charge separation, which transfers an electron from the donor P700 chlorophyll pair to the spectroscopically characterized acceptors A0, A1, FX, FA and FB in turn. Oxidized P700 is reduced on the lumenal side of the thylakoid membrane by plastocyanin. In Panax ginseng (Korean ginseng), this protein is Photosystem I P700 chlorophyll a apoprotein A1.